Reading from the N-terminus, the 157-residue chain is 2-C-methyl-D-erythritol 2,4-cyclodiphosphate synthase (157 aa).

Aspartate 9 and histidine 11 together coordinate a divalent metal cation. Residues 9 to 11 (DVH) and 35 to 36 (HS) each bind 4-CDP-2-C-methyl-D-erythritol 2-phosphate. An a divalent metal cation-binding site is contributed by histidine 43. Residues 57–59 (DIG), phenylalanine 140, and arginine 143 contribute to the 4-CDP-2-C-methyl-D-erythritol 2-phosphate site.

The protein belongs to the IspF family. As to quaternary structure, homotrimer. Requires a divalent metal cation as cofactor.

The enzyme catalyses 4-CDP-2-C-methyl-D-erythritol 2-phosphate = 2-C-methyl-D-erythritol 2,4-cyclic diphosphate + CMP. Its pathway is isoprenoid biosynthesis; isopentenyl diphosphate biosynthesis via DXP pathway; isopentenyl diphosphate from 1-deoxy-D-xylulose 5-phosphate: step 4/6. Functionally, involved in the biosynthesis of isopentenyl diphosphate (IPP) and dimethylallyl diphosphate (DMAPP), two major building blocks of isoprenoid compounds. Catalyzes the conversion of 4-diphosphocytidyl-2-C-methyl-D-erythritol 2-phosphate (CDP-ME2P) to 2-C-methyl-D-erythritol 2,4-cyclodiphosphate (ME-CPP) with a corresponding release of cytidine 5-monophosphate (CMP). In Caldicellulosiruptor bescii (strain ATCC BAA-1888 / DSM 6725 / KCTC 15123 / Z-1320) (Anaerocellum thermophilum), this protein is 2-C-methyl-D-erythritol 2,4-cyclodiphosphate synthase.